A 448-amino-acid chain; its full sequence is Mitochondrial distribution and morphology protein 10 (448 aa).

2 disordered regions span residues 101–126 (QIHP…SEKA) and 366–386 (PPLP…PAGE). Basic and acidic residues predominate over residues 112–126 (NESRHAEPNERSEKA).

This sequence belongs to the MDM10 family. In terms of assembly, component of the ER-mitochondria encounter structure (ERMES) or MDM complex, composed of MMM1, MDM10, MDM12 and MDM34. Associates with the mitochondrial outer membrane sorting assembly machinery SAM(core) complex.

It is found in the mitochondrion outer membrane. In terms of biological role, component of the ERMES/MDM complex, which serves as a molecular tether to connect the endoplasmic reticulum and mitochondria. Components of this complex are involved in the control of mitochondrial shape and protein biogenesis and may function in phospholipid exchange. MDM10 is involved in the late assembly steps of the general translocase of the mitochondrial outer membrane (TOM complex). Functions in the TOM40-specific route of the assembly of outer membrane beta-barrel proteins, including the association of TOM40 with the receptor TOM22 and small TOM proteins. Can associate with the SAM(core) complex as well as the MDM12-MMM1 complex, both involved in late steps of the major beta-barrel assembly pathway, that is responsible for biogenesis of all outer membrane beta-barrel proteins. May act as a switch that shuttles between both complexes and channels precursor proteins into the TOM40-specific pathway. Plays a role in mitochondrial morphology and in the inheritance of mitochondria. In Coccidioides immitis (strain RS) (Valley fever fungus), this protein is Mitochondrial distribution and morphology protein 10.